Consider the following 239-residue polypeptide: ATP-dependent dethiobiotin synthetase BioD (239 aa).

15–20 (EIGKTF) contacts ATP. Threonine 19 contacts Mg(2+). Lysine 40 is an active-site residue. ATP-binding positions include aspartate 57, 118-121 (EGVG), 178-179 (NH), and 211-213 (AHL). Mg(2+) contacts are provided by aspartate 57 and glutamate 118.

The protein belongs to the dethiobiotin synthetase family. Homodimer. Requires Mg(2+) as cofactor.

Its subcellular location is the cytoplasm. It catalyses the reaction (7R,8S)-7,8-diammoniononanoate + CO2 + ATP = (4R,5S)-dethiobiotin + ADP + phosphate + 3 H(+). The protein operates within cofactor biosynthesis; biotin biosynthesis; biotin from 7,8-diaminononanoate: step 1/2. Functionally, catalyzes a mechanistically unusual reaction, the ATP-dependent insertion of CO2 between the N7 and N8 nitrogen atoms of 7,8-diaminopelargonic acid (DAPA, also called 7,8-diammoniononanoate) to form a ureido ring. The sequence is that of ATP-dependent dethiobiotin synthetase BioD from Burkholderia vietnamiensis (strain G4 / LMG 22486) (Burkholderia cepacia (strain R1808)).